Here is a 506-residue protein sequence, read N- to C-terminus: Deoxyguanosinetriphosphate triphosphohydrolase (506 aa).

The HD domain occupies arginine 66–cysteine 274.

This sequence belongs to the dGTPase family. Type 1 subfamily. Homotetramer. Mg(2+) is required as a cofactor.

The enzyme catalyses dGTP + H2O = 2'-deoxyguanosine + triphosphate + H(+). DGTPase preferentially hydrolyzes dGTP over the other canonical NTPs. The chain is Deoxyguanosinetriphosphate triphosphohydrolase from Yersinia pestis bv. Antiqua (strain Antiqua).